The chain runs to 49 residues: Large ribosomal subunit protein bL32c (49 aa).

The disordered stretch occupies residues 1 to 23 (MTPKKRKSKSKKNLRKTNWKKKA).

The protein belongs to the bacterial ribosomal protein bL32 family.

The protein localises to the plastid. Its subcellular location is the chloroplast. This chain is Large ribosomal subunit protein bL32c, found in Oltmannsiellopsis viridis (Marine flagellate).